Reading from the N-terminus, the 208-residue chain is Thymidylate kinase (208 aa).

ATP is bound at residue 10–17 (GIDGSGKS).

The protein belongs to the thymidylate kinase family.

The catalysed reaction is dTMP + ATP = dTDP + ADP. In terms of biological role, phosphorylation of dTMP to form dTDP in both de novo and salvage pathways of dTTP synthesis. The polypeptide is Thymidylate kinase (Jannaschia sp. (strain CCS1)).